Here is a 244-residue protein sequence, read N- to C-terminus: Carboxy-S-adenosyl-L-methionine synthase (244 aa).

S-adenosyl-L-methionine contacts are provided by residues Tyr41, 66–68 (GCS), Asn134, and Arg201.

Belongs to the class I-like SAM-binding methyltransferase superfamily. Cx-SAM synthase family. Homodimer.

It catalyses the reaction prephenate + S-adenosyl-L-methionine = carboxy-S-adenosyl-L-methionine + 3-phenylpyruvate + H2O. Its function is as follows. Catalyzes the conversion of S-adenosyl-L-methionine (SAM) to carboxy-S-adenosyl-L-methionine (Cx-SAM). The protein is Carboxy-S-adenosyl-L-methionine synthase of Cellvibrio japonicus (strain Ueda107) (Pseudomonas fluorescens subsp. cellulosa).